We begin with the raw amino-acid sequence, 338 residues long: MAAPGRPSPLAERLRGAWQHRGALALALWPLSLLYGVLTALRRALYRTGLLRSERLPVPVIVVGNVIAGGAGKTPVTLAVVRHLQARGWRPGVISRGYGRATVDCREVLPASSAAEVGDEPLLIARASGAPVFVARRRAQAGRALLAAHPATNILVCDDGLQHLALARDLEVCVFNDEGAGNGWMLPAGPLREPWPRAVDLVLHAGSSPGGGAPQFALSRELATHAVNASGHQLPLEQLQGEPSHALAAIARPHDFFAMLHARGIQPESEEALPDHYDFSSWKRPPDKRLRLICTEKDAVKLWPAHPDALAVPLALRIPPAFFDALDARLASLSSSGH.

An ATP-binding site is contributed by 67 to 74; sequence IAGGAGKT.

This sequence belongs to the LpxK family.

The catalysed reaction is a lipid A disaccharide + ATP = a lipid IVA + ADP + H(+). Its pathway is glycolipid biosynthesis; lipid IV(A) biosynthesis; lipid IV(A) from (3R)-3-hydroxytetradecanoyl-[acyl-carrier-protein] and UDP-N-acetyl-alpha-D-glucosamine: step 6/6. In terms of biological role, transfers the gamma-phosphate of ATP to the 4'-position of a tetraacyldisaccharide 1-phosphate intermediate (termed DS-1-P) to form tetraacyldisaccharide 1,4'-bis-phosphate (lipid IVA). The protein is Tetraacyldisaccharide 4'-kinase of Acidovorax ebreus (strain TPSY) (Diaphorobacter sp. (strain TPSY)).